The primary structure comprises 187 residues: MPKINGNEIRPGNVLEHNDGLWAAVKVDHVKPGKGGAFAQVEMRNLRNGSKLNERFRSADKVERVRLEQKDQQFLYEDAGMLVVMDTETYEQVQLPAELLGERRPFLQDGMTIVVEFYEEEALNATLPQKVVCKIVETEAVVKGQTAAKSFKPALLENGVKVMVPPFVGQDENIVVNTETMEYSERA.

Belongs to the elongation factor P family.

It localises to the cytoplasm. It participates in protein biosynthesis; polypeptide chain elongation. Its function is as follows. Involved in peptide bond synthesis. Stimulates efficient translation and peptide-bond synthesis on native or reconstituted 70S ribosomes in vitro. Probably functions indirectly by altering the affinity of the ribosome for aminoacyl-tRNA, thus increasing their reactivity as acceptors for peptidyl transferase. This is Elongation factor P from Roseobacter denitrificans (strain ATCC 33942 / OCh 114) (Erythrobacter sp. (strain OCh 114)).